The chain runs to 405 residues: Protein held out wings (405 aa).

Positions 142-210 constitute a KH domain; that stretch reads YVPVREHPDF…HLSDDLHVLI (69 aa).

In terms of assembly, homodimer. Interacts with Sxl; promoting nuclear retention of msl-2 transcripts. In terms of tissue distribution, during embryogenesis, expression is seen in mesodermal precursors of somatic, visceral and pharyngeal muscle. Later in embryogenesis, expression is restricted to heart and muscle attachment sites of the epidermis. During onset of metamorphosis, expression is seen in muscle and muscle attachment cells.

It is found in the nucleus. Functionally, RNA-binding protein involved in muscle development and dosage compensation. Vital role in steroid regulation of muscle development and to control heart rate. Required during embryogenesis, in late stages of somatic muscle development, for myotube migration and during metamorphosis for muscle reorganization. Required for integrin-mediated cell-adhesion in wing blade. Together with Sxl, acts as an inhibitor of dosage compensation in females by preventing production of msl-2 protein, an essential component of the MSL complex. Specifically binds to the 5'-UTR of msl-2 transcripts and cooperates with Sxl to promote nuclear retention of msl-2 mRNAs. The polypeptide is Protein held out wings (how) (Drosophila melanogaster (Fruit fly)).